Here is a 311-residue protein sequence, read N- to C-terminus: tRNA-cytidine(32) 2-sulfurtransferase (311 aa).

The PP-loop motif signature appears at 47 to 52 (SGGKDS). Positions 122, 125, and 213 each coordinate [4Fe-4S] cluster.

It belongs to the TtcA family. As to quaternary structure, homodimer. The cofactor is Mg(2+). Requires [4Fe-4S] cluster as cofactor.

It localises to the cytoplasm. It catalyses the reaction cytidine(32) in tRNA + S-sulfanyl-L-cysteinyl-[cysteine desulfurase] + AH2 + ATP = 2-thiocytidine(32) in tRNA + L-cysteinyl-[cysteine desulfurase] + A + AMP + diphosphate + H(+). The protein operates within tRNA modification. Functionally, catalyzes the ATP-dependent 2-thiolation of cytidine in position 32 of tRNA, to form 2-thiocytidine (s(2)C32). The sulfur atoms are provided by the cysteine/cysteine desulfurase (IscS) system. In Klebsiella pneumoniae (strain 342), this protein is tRNA-cytidine(32) 2-sulfurtransferase.